We begin with the raw amino-acid sequence, 274 residues long: MQFSKMHGLGNDFMVVDAVTQNVYFSPELIRRLADRHTGVGFDQMLVVEPPYDPELDFHYRIFNADGSEVSQCGNGARCFARFVRLKGLTNKREISVSTQTGRMILSVTEDEQVCVNMGEPDFEPQTVPFRAAKAEKTYILRAAEHTVLCGVVSMGNPHCVMQVDDVSVANVALLGPVLENHERFPERANIGFMQVVSRDHIRLRVYERGAGETQACGSGACAAVAVGVVQDLLNENVHVELPGGSLHIRWQGPGHPLYMTGPATHVYDGFIHL.

Substrate contacts are provided by N11, Q44, and N64. C73 functions as the Proton donor in the catalytic mechanism. Residues 74-75 (GN), N157, N190, and 208-209 (ER) contribute to the substrate site. The Proton acceptor role is filled by C217. 218-219 (GS) lines the substrate pocket.

This sequence belongs to the diaminopimelate epimerase family. In terms of assembly, homodimer.

It is found in the cytoplasm. The catalysed reaction is (2S,6S)-2,6-diaminopimelate = meso-2,6-diaminopimelate. It participates in amino-acid biosynthesis; L-lysine biosynthesis via DAP pathway; DL-2,6-diaminopimelate from LL-2,6-diaminopimelate: step 1/1. Catalyzes the stereoinversion of LL-2,6-diaminopimelate (L,L-DAP) to meso-diaminopimelate (meso-DAP), a precursor of L-lysine and an essential component of the bacterial peptidoglycan. This Yersinia pseudotuberculosis serotype O:1b (strain IP 31758) protein is Diaminopimelate epimerase.